The primary structure comprises 491 residues: N-succinylglutamate 5-semialdehyde dehydrogenase (491 aa).

Residue 225–230 (GSSTVG) participates in NAD(+) binding. Residues Glu-248 and Cys-282 contribute to the active site.

Belongs to the aldehyde dehydrogenase family. AstD subfamily.

It catalyses the reaction N-succinyl-L-glutamate 5-semialdehyde + NAD(+) + H2O = N-succinyl-L-glutamate + NADH + 2 H(+). It participates in amino-acid degradation; L-arginine degradation via AST pathway; L-glutamate and succinate from L-arginine: step 4/5. In terms of biological role, catalyzes the NAD-dependent reduction of succinylglutamate semialdehyde into succinylglutamate. In Marinobacter nauticus (strain ATCC 700491 / DSM 11845 / VT8) (Marinobacter aquaeolei), this protein is N-succinylglutamate 5-semialdehyde dehydrogenase.